A 118-amino-acid chain; its full sequence is Co-chaperonin GroES (118 aa).

The protein belongs to the GroES chaperonin family. In terms of assembly, heptamer of 7 subunits arranged in a ring. Interacts with the chaperonin GroEL.

The protein localises to the cytoplasm. Its function is as follows. Together with the chaperonin GroEL, plays an essential role in assisting protein folding. The GroEL-GroES system forms a nano-cage that allows encapsulation of the non-native substrate proteins and provides a physical environment optimized to promote and accelerate protein folding. GroES binds to the apical surface of the GroEL ring, thereby capping the opening of the GroEL channel. This chain is Co-chaperonin GroES, found in Helicobacter pylori (strain HPAG1).